We begin with the raw amino-acid sequence, 112 residues long: Transmembrane protein 14 homolog (112 aa).

A helical transmembrane segment spans residues Val3–Ala23.

This sequence belongs to the TMEM14 family.

The protein localises to the membrane. This is Transmembrane protein 14 homolog from Drosophila melanogaster (Fruit fly).